We begin with the raw amino-acid sequence, 367 residues long: Outer membrane protein assembly factor BamC (367 aa).

The N-terminal stretch at 1–16 (MRLLPLFLMVTLAASG) is a signal peptide. Residue Cys-17 is the site of N-palmitoyl cysteine attachment. Residue Cys-17 is the site of S-diacylglycerol cysteine attachment.

The protein belongs to the BamC family. As to quaternary structure, part of the Bam complex.

It is found in the cell outer membrane. In terms of biological role, part of the outer membrane protein assembly complex, which is involved in assembly and insertion of beta-barrel proteins into the outer membrane. The protein is Outer membrane protein assembly factor BamC of Thiobacillus denitrificans (strain ATCC 25259 / T1).